The following is a 213-amino-acid chain: Protein nullo (213 aa).

In terms of tissue distribution, blastoderm. Throughout the entire cortex of the embryo although the distribution is not uniform.

In terms of biological role, actin-myosin network stability during cellularization. Might be involved in increasing actin-actin interactions or membrane-to-cytoskeleton attachments. nullo together with Sry-a and bnk may provide auxiliary functions, by acting both to stabilize a large and dynamic microfilament structure and regulate its functions. This Drosophila melanogaster (Fruit fly) protein is Protein nullo (nullo).